A 335-amino-acid polypeptide reads, in one-letter code: DNA-directed RNA polymerase RPB7 homolog (335 aa).

This sequence belongs to the Asfivirus DNA-directed RNA polymerase RPB7 homolog family. Part of the viral DNA-directed RNA polymerase that consists of 8 polII-like subunits (RPB1, RPB2, RPB3, RPB5, RPB6, RPB7, RPB9, RPB10), a capping enzyme and a termination factor.

The protein localises to the host cytoplasm. It is found in the virion. In terms of biological role, component of the DNA-directed RNA polymerase (RNAP) that catalyzes the transcription in the cytoplasm of viral DNA into RNA using the four ribonucleoside triphosphates as substrates. This is DNA-directed RNA polymerase RPB7 homolog from Ornithodoros (relapsing fever ticks).